We begin with the raw amino-acid sequence, 506 residues long: Zinc finger and SCAN domain containing protein 4D (506 aa).

The region spanning 37–119 (SAQLNFSPSN…RFMESLTDEC (83 aa)) is the SCAN box domain. Residues 238–264 (SQGNSSHHVDFRSAPTPADVPMEEQPK) form a disordered region. C2H2-type zinc fingers lie at residues 395 to 417 (FKCEECSRMFKHARSLSSHQRTH), 424 to 446 (LLCVTCQKMFKRVSDRRTHEIIH), 452 to 474 (FKCSTCEKSFSHKTNLKSHEMIH), and 480 to 503 (YVCSLCSRRFRQSSTYHRHLRNYH).

As to expression, highly expressed at the 2-cell stage but its expression is rapidly turned off.

The protein localises to the nucleus. Its subcellular location is the chromosome. It localises to the telomere. Its function is as follows. Transcription factor required to regulate early development. Binds telomeres and plays a key role in genomic stability by regulating telomere elongation. Acts as an activator of spontaneous telomere sister chromatid exchange (T-SCE) and telomere elongation. This is Zinc finger and SCAN domain containing protein 4D (Zscan4d) from Mus musculus (Mouse).